A 95-amino-acid chain; its full sequence is Small ubiquitin-related modifier 4 (95 aa).

Residues 17 to 95 (HINLKVAGQD…VFQQPTGGVY (79 aa)) form the Ubiquitin-like domain. Residue Gly-93 forms a Glycyl lysine isopeptide (Gly-Lys) (interchain with K-? in acceptor proteins) linkage. Residues 94–95 (VY) constitute a propeptide that is removed on maturation.

It belongs to the ubiquitin family. SUMO subfamily. Interacts with SAE2. Covalently attached to a number of proteins. Post-translationally, in contrast to SUMO1, SUMO2 and SUMO3, seems to be insensitive to sentrin-specific proteases due to the presence of Pro-90. This may impair processing to mature form and conjugation to substrates. In terms of tissue distribution, expressed mainly in adult and embryonic kidney. Expressed at various levels in immune tissues, with the highest expression in the lymph node and spleen.

In terms of biological role, ubiquitin-like protein which can be covalently attached to target lysines as a monomer. Does not seem to be involved in protein degradation and may modulate protein subcellular localization, stability or activity. Upon oxidative stress, conjugates to various anti-oxidant enzymes, chaperones, and stress defense proteins. May also conjugate to NFKBIA, TFAP2A and FOS, negatively regulating their transcriptional activity, and to NR3C1, positively regulating its transcriptional activity. Covalent attachment to its substrates requires prior activation by the E1 complex SAE1-SAE2 and linkage to the E2 enzyme UBE2I. The protein is Small ubiquitin-related modifier 4 (SUMO4) of Homo sapiens (Human).